The following is a 307-amino-acid chain: Pantothenate kinase (307 aa).

Position 90 to 97 (90 to 97 (GSVAVGKS)) interacts with ATP.

The protein belongs to the prokaryotic pantothenate kinase family.

The protein localises to the cytoplasm. The catalysed reaction is (R)-pantothenate + ATP = (R)-4'-phosphopantothenate + ADP + H(+). The protein operates within cofactor biosynthesis; coenzyme A biosynthesis; CoA from (R)-pantothenate: step 1/5. This is Pantothenate kinase from Limosilactobacillus fermentum (strain NBRC 3956 / LMG 18251) (Lactobacillus fermentum).